Reading from the N-terminus, the 378-residue chain is MDCSFPEGDPAAVCGKRQQFGSRFLSDPARVFHHNAWDNVEWSEEQAAEAERKVQENSTQRVCQEKQADYEINANKYWNNFYKIHENGFFKDRHWLFTEFPELAPSQNHLKNLLSENKRSEVYEYYRSGEDGPDLTIEEQHRCSSVSLGDKTQPPLTEESVTQKLHHLEICANEFPGSSATYRILEVGCGVGNTVFPILQTNNDPSLFVYCCDFSSTAVELVQTNSAYDPSRCFAFVHDLCDEDKSYPMPENSLDVIILIFVLSAIVPDKMQNAINRLSRLLKPGGIMLLRDYGRYDMAQLRFKKGQCLSENFYVRGDGTRVYFFTQDELDTLFTTAGLEKVQNLVDRRLQVNRGKQLTMYRVWIQCKYRKPLGSSTG.

Positions 78, 82, 188, 213, 239, 240, and 260 each coordinate S-adenosyl-L-methionine.

This sequence belongs to the methyltransferase superfamily. METL family. As to quaternary structure, monomer. Interacts with DALRD3.

The protein resides in the cytoplasm. The catalysed reaction is cytidine(32) in tRNA(Thr) + S-adenosyl-L-methionine = N(3)-methylcytidine(32) in tRNA(Thr) + S-adenosyl-L-homocysteine + H(+). It catalyses the reaction cytidine(32) in tRNA(Arg)(CCU) + S-adenosyl-L-methionine = N(3)-methylcytidine(32) in tRNA(Arg)(CCU) + S-adenosyl-L-homocysteine + H(+). In terms of biological role, S-adenosyl-L-methionine-dependent methyltransferase that mediates N(3)-methylcytidine modification of residue 32 of the tRNA anticodon loop of tRNA(Thr)(UGU) and tRNA(Arg)(CCU). N(3)-methylcytidine methylation by METTL2 requires the N6-threonylcarbamoylation of tRNA (t6A37) by the EKC/KEOPS complex as prerequisite. In Bos taurus (Bovine), this protein is tRNA N(3)-cytidine methyltransferase METTL2 (METTL2).